A 313-amino-acid polypeptide reads, in one-letter code: Porphobilinogen deaminase (313 aa).

The residue at position 242 (C242) is an S-(dipyrrolylmethanemethyl)cysteine.

It belongs to the HMBS family. As to quaternary structure, monomer. Dipyrromethane is required as a cofactor.

It catalyses the reaction 4 porphobilinogen + H2O = hydroxymethylbilane + 4 NH4(+). Its pathway is porphyrin-containing compound metabolism; protoporphyrin-IX biosynthesis; coproporphyrinogen-III from 5-aminolevulinate: step 2/4. Tetrapolymerization of the monopyrrole PBG into the hydroxymethylbilane pre-uroporphyrinogen in several discrete steps. The sequence is that of Porphobilinogen deaminase from Klebsiella pneumoniae subsp. pneumoniae (strain ATCC 700721 / MGH 78578).